A 155-amino-acid chain; its full sequence is Small ribosomal subunit protein uS7 (155 aa).

Belongs to the universal ribosomal protein uS7 family. Part of the 30S ribosomal subunit. Contacts proteins S9 and S11.

Functionally, one of the primary rRNA binding proteins, it binds directly to 16S rRNA where it nucleates assembly of the head domain of the 30S subunit. Is located at the subunit interface close to the decoding center, probably blocks exit of the E-site tRNA. The protein is Small ribosomal subunit protein uS7 of Chlorobium phaeobacteroides (strain BS1).